The primary structure comprises 302 residues: Oxygen-dependent coproporphyrinogen-III oxidase (302 aa).

Serine 94 contacts substrate. A divalent metal cation contacts are provided by histidine 98 and histidine 108. The Proton donor role is filled by histidine 108. 110–112 provides a ligand contact to substrate; it reads NVR. A divalent metal cation-binding residues include histidine 147 and histidine 177. An important for dimerization region spans residues 242–277; that stretch reads YVEFNLVWDRGTLFGLQSGGRTESILMSMPPLVRWE. 260–262 lines the substrate pocket; sequence GGR.

This sequence belongs to the aerobic coproporphyrinogen-III oxidase family. Homodimer. A divalent metal cation serves as cofactor.

It is found in the cytoplasm. It carries out the reaction coproporphyrinogen III + O2 + 2 H(+) = protoporphyrinogen IX + 2 CO2 + 2 H2O. It participates in porphyrin-containing compound metabolism; protoporphyrin-IX biosynthesis; protoporphyrinogen-IX from coproporphyrinogen-III (O2 route): step 1/1. In terms of biological role, involved in the heme biosynthesis. Catalyzes the aerobic oxidative decarboxylation of propionate groups of rings A and B of coproporphyrinogen-III to yield the vinyl groups in protoporphyrinogen-IX. The protein is Oxygen-dependent coproporphyrinogen-III oxidase of Chromobacterium violaceum (strain ATCC 12472 / DSM 30191 / JCM 1249 / CCUG 213 / NBRC 12614 / NCIMB 9131 / NCTC 9757 / MK).